The sequence spans 158 residues: Ribonuclease H (158 aa).

In terms of domain architecture, RNase H type-1 spans 2 to 143 (PEKIIELFTD…VDALLNRVMD (142 aa)). Residues D11, E49, D71, and D135 each coordinate Mg(2+).

Belongs to the RNase H family. As to quaternary structure, monomer. Mg(2+) serves as cofactor.

The protein localises to the cytoplasm. The enzyme catalyses Endonucleolytic cleavage to 5'-phosphomonoester.. Endonuclease that specifically degrades the RNA of RNA-DNA hybrids. The sequence is that of Ribonuclease H from Acidithiobacillus ferrooxidans (strain ATCC 23270 / DSM 14882 / CIP 104768 / NCIMB 8455) (Ferrobacillus ferrooxidans (strain ATCC 23270)).